The chain runs to 429 residues: Enolase (429 aa).

(2R)-2-phosphoglycerate is bound at residue glutamine 163. Glutamate 205 serves as the catalytic Proton donor. Residues aspartate 242, glutamate 286, and aspartate 313 each contribute to the Mg(2+) site. Residues lysine 338, arginine 367, serine 368, and lysine 389 each coordinate (2R)-2-phosphoglycerate. Residue lysine 338 is the Proton acceptor of the active site.

Belongs to the enolase family. It depends on Mg(2+) as a cofactor.

It is found in the cytoplasm. The protein resides in the secreted. Its subcellular location is the cell surface. The catalysed reaction is (2R)-2-phosphoglycerate = phosphoenolpyruvate + H2O. The protein operates within carbohydrate degradation; glycolysis; pyruvate from D-glyceraldehyde 3-phosphate: step 4/5. Functionally, catalyzes the reversible conversion of 2-phosphoglycerate (2-PG) into phosphoenolpyruvate (PEP). It is essential for the degradation of carbohydrates via glycolysis. The chain is Enolase from Pelobacter propionicus (strain DSM 2379 / NBRC 103807 / OttBd1).